The following is an 880-amino-acid chain: DNA-directed RNA polymerase subunit Rpo1N (880 aa).

The Zn(2+) site is built by Cys-58, Cys-61, Cys-68, His-71, Cys-98, Cys-101, Cys-146, and Cys-149. Mg(2+) is bound by residues Asp-456, Asp-458, and Asp-460. Residues Arg-573, Cys-575, Cys-580, His-582, and Ser-584 each coordinate Zn(2+).

The protein belongs to the RNA polymerase beta' chain family. In terms of assembly, part of the 13-subunit RNA polymerase complex. Interacts with TFS4. As to quaternary structure, (Microbial infection) Binds viral protein RIP, which blocks global transcription. Requires Mg(2+) as cofactor. The cofactor is Zn(2+).

It localises to the cytoplasm. The enzyme catalyses RNA(n) + a ribonucleoside 5'-triphosphate = RNA(n+1) + diphosphate. Its activity is regulated as follows. (Microbial infection) Binds to viral protein RIP (AC Q3V4R7), which inhibits global transcription. DNA-dependent RNA polymerase (RNAP) catalyzes the transcription of DNA into RNA using the four ribonucleoside triphosphates as substrates. Forms the clamp head domain. The chain is DNA-directed RNA polymerase subunit Rpo1N from Sulfolobus acidocaldarius (strain ATCC 33909 / DSM 639 / JCM 8929 / NBRC 15157 / NCIMB 11770).